We begin with the raw amino-acid sequence, 270 residues long: tRNA (guanine-N(1)-)-methyltransferase (270 aa).

S-adenosyl-L-methionine contacts are provided by residues glycine 113 and 133–138 (IGDYVL). Positions 251-270 (APTEGTGLIHHRDVEGPGEG) are disordered. Positions 260–270 (HHRDVEGPGEG) are enriched in basic and acidic residues.

It belongs to the RNA methyltransferase TrmD family. As to quaternary structure, homodimer.

Its subcellular location is the cytoplasm. The enzyme catalyses guanosine(37) in tRNA + S-adenosyl-L-methionine = N(1)-methylguanosine(37) in tRNA + S-adenosyl-L-homocysteine + H(+). Specifically methylates guanosine-37 in various tRNAs. The protein is tRNA (guanine-N(1)-)-methyltransferase of Frankia casuarinae (strain DSM 45818 / CECT 9043 / HFP020203 / CcI3).